Consider the following 525-residue polypeptide: Ribonuclease Y (525 aa).

The chain crosses the membrane as a helical span at residues 3–23 (IFFISLVLIVLASVVFFVGGF). One can recognise a KH domain in the interval 215-300 (ALSVVHIQSD…KAYEDAKKEI (86 aa)). In terms of domain architecture, HD spans 341 to 433 (LLQHSREVAM…VDAANVISLS (93 aa)).

It belongs to the RNase Y family.

The protein localises to the cell membrane. In terms of biological role, endoribonuclease that initiates mRNA decay. The chain is Ribonuclease Y from Chlorobium phaeobacteroides (strain DSM 266 / SMG 266 / 2430).